A 711-amino-acid chain; its full sequence is DNA ligase (711 aa).

NAD(+)-binding positions include 39–43 (DAEYD), 88–89 (SL), and glutamate 119. The active-site N6-AMP-lysine intermediate is the lysine 121. Residues arginine 142, glutamate 179, lysine 295, and lysine 319 each coordinate NAD(+). 4 residues coordinate Zn(2+): cysteine 416, cysteine 419, cysteine 434, and cysteine 440. Positions 630 to 711 (ESVSSLAGRA…LRELLAGAGA (82 aa)) constitute a BRCT domain.

Belongs to the NAD-dependent DNA ligase family. LigA subfamily. Mg(2+) serves as cofactor. The cofactor is Mn(2+).

It carries out the reaction NAD(+) + (deoxyribonucleotide)n-3'-hydroxyl + 5'-phospho-(deoxyribonucleotide)m = (deoxyribonucleotide)n+m + AMP + beta-nicotinamide D-nucleotide.. Functionally, DNA ligase that catalyzes the formation of phosphodiester linkages between 5'-phosphoryl and 3'-hydroxyl groups in double-stranded DNA using NAD as a coenzyme and as the energy source for the reaction. It is essential for DNA replication and repair of damaged DNA. The sequence is that of DNA ligase from Halorhodospira halophila (strain DSM 244 / SL1) (Ectothiorhodospira halophila (strain DSM 244 / SL1)).